Here is a 422-residue protein sequence, read N- to C-terminus: Elongation factor 1-alpha (422 aa).

The 217-residue stretch at 5–221 folds into the tr-type G domain; that stretch reads KPHMNLAVIG…NNLKVPEKPS (217 aa). The G1 stretch occupies residues 14–21; sequence GHIDHGKS. 14-21 provides a ligand contact to GTP; that stretch reads GHIDHGKS. S21 is a binding site for Mg(2+). The interval 70 to 74 is G2; the sequence is GITID. A G3 region spans residues 91–94; sequence DCPG. Residues 91-95 and 146-149 contribute to the GTP site; these read DCPGH and NKMD. Residues 146 to 149 form a G4 region; sequence NKMD. A G5 region spans residues 185–187; it reads SAF.

This sequence belongs to the TRAFAC class translation factor GTPase superfamily. Classic translation factor GTPase family. EF-Tu/EF-1A subfamily.

The protein localises to the cytoplasm. The enzyme catalyses GTP + H2O = GDP + phosphate + H(+). Functionally, GTP hydrolase that promotes the GTP-dependent binding of aminoacyl-tRNA to the A-site of ribosomes during protein biosynthesis. The protein is Elongation factor 1-alpha of Methanosarcina barkeri (strain Fusaro / DSM 804).